Here is a 243-residue protein sequence, read N- to C-terminus: Epoxyqueuosine reductase QueH (243 aa).

A compositionally biased stretch (basic and acidic residues) spans 1–16; sequence MHRTKLEQKQPHFDAQ. A disordered region spans residues 1-30; it reads MHRTKLEQKQPHFDAQKRRKKECKNSNTPF. The [4Fe-4S] cluster site is built by C49, C50, C128, and C131. A disulfide bridge links C211 with C213.

It belongs to the QueH family.

The catalysed reaction is epoxyqueuosine(34) in tRNA + AH2 = queuosine(34) in tRNA + A + H2O. It functions in the pathway tRNA modification; tRNA-queuosine biosynthesis. Its function is as follows. Catalyzes the conversion of epoxyqueuosine (oQ) to queuosine (Q), which is a hypermodified base found in the wobble positions of tRNA(Asp), tRNA(Asn), tRNA(His) and tRNA(Tyr). The protein is Epoxyqueuosine reductase QueH of Histophilus somni (strain 129Pt) (Haemophilus somnus).